Here is a 60-residue protein sequence, read N- to C-terminus: uncharacterized protein (60 aa).

The chain crosses the membrane as a helical span at residues 19–39; sequence LSIMCGCSIYFLLLVFILTFY.

It is found in the membrane. This is an uncharacterized protein from Saccharomyces cerevisiae (strain ATCC 204508 / S288c) (Baker's yeast).